The chain runs to 393 residues: Elongation factor Tu (393 aa).

The 199-residue stretch at 6–204 (KPHINVGTIG…ALEKIELPVR (199 aa)) folds into the tr-type G domain. Residues 15-22 (GHVDHGKT) are G1. 15 to 22 (GHVDHGKT) serves as a coordination point for GTP. Thr22 is a Mg(2+) binding site. A G2 region spans residues 58-62 (GITIS). The segment at 79–82 (DCPG) is G3. GTP-binding positions include 79–83 (DCPGH) and 134–137 (NKCD). Positions 134–137 (NKCD) are G4. The segment at 172-174 (SAV) is G5.

This sequence belongs to the TRAFAC class translation factor GTPase superfamily. Classic translation factor GTPase family. EF-Tu/EF-1A subfamily. In terms of assembly, monomer.

The protein resides in the cytoplasm. It catalyses the reaction GTP + H2O = GDP + phosphate + H(+). In terms of biological role, GTP hydrolase that promotes the GTP-dependent binding of aminoacyl-tRNA to the A-site of ribosomes during protein biosynthesis. In Anaplasma marginale (strain St. Maries), this protein is Elongation factor Tu.